Reading from the N-terminus, the 788-residue chain is Xylulose-5-phosphate phosphoketolase (788 aa).

The protein belongs to the XFP family. In terms of assembly, homohexamer. The cofactor is thiamine diphosphate.

It catalyses the reaction D-xylulose 5-phosphate + phosphate = acetyl phosphate + D-glyceraldehyde 3-phosphate + H2O. This is Xylulose-5-phosphate phosphoketolase (xpkA) from Lactiplantibacillus pentosus (Lactobacillus pentosus).